Consider the following 1056-residue polypeptide: Potassium transporter TRK1 (1056 aa).

The Cytoplasmic portion of the chain corresponds to 1–46 (MLYRVSGFYKRHTRNFTNIDYGYYIRNFIHHIASKIYPYAKVVLPN). A helical membrane pass occupies residues 47 to 67 (FRAAHYFYILTLVILGSILVY). Over 68–73 (PVKTCA) the chain is Extracellular. Residues 74–90 (YIDVLFFTAGASTQAGL) lie within the membrane without spanning it. Residues 91 to 99 (NTVNVNDLS) are Extracellular-facing. Residues 100-122 (LYQQIVLYLLATLATPIFIHGSL) traverse the membrane as a helical segment. The Cytoplasmic segment spans residues 123 to 622 (LFVRLYYFER…LGGIEYRAVK (500 aa)). Disordered stretches follow at residues 180 to 276 (REAE…IDPE), 290 to 350 (KNQE…EDED), and 404 to 571 (PWTS…SIEN). Low complexity predominate over residues 186-203 (SSSSPQSSSSQTSQPVST). Basic and acidic residues predominate over residues 236-245 (EKIHFEEPQR). Residues 335 to 344 (PATNSVGTGN) show a composition bias toward polar residues. The segment covering 412 to 423 (TLSNSSKKGSLS) has biased composition (low complexity). Composition is skewed to acidic residues over residues 428-449 (DTED…SDIS) and 469-487 (YEED…DDGE). The span at 521–533 (RSNTLDTPQQNTS) shows a compositional bias: polar residues. Residues 537-549 (KIRKKAPKRKTPR) show a composition bias toward basic residues. Over residues 553-563 (NASFNQHSNVS) the composition is skewed to polar residues. A helical transmembrane segment spans residues 623-646 (LLIKIIVVYYVGFNIIPGVMLSIW). The Extracellular segment spans residues 647–665 (IYCMPHYKNLMISSSISPA). An intramembrane segment occupies 666-682 (WWAFFTSQSSFNDLGLT). The Extracellular segment spans residues 683 to 693 (LTSNSMMSFNQ). The chain crosses the membrane as a helical span at residues 694–710 (NAFVQILCSFLIVIGNT). Residues 711 to 754 (GFPILLRFIIWVMFKTARPLSLYKESLGFLLDHPRRCFTLLFPS) lie on the Cytoplasmic side of the membrane. A helical membrane pass occupies residues 755–778 (VPTWWLFFILVVLNGFDLVIFCIL). Over 779–793 (DLHDDTFKGVDMGYR) the chain is Extracellular. The stretch at 794–810 (VLNGLFQAFCTRTVGFS) is an intramembrane region. Residues 811–817 (VMDLSQL) lie on the Extracellular side of the membrane. Residues 818–841 (HAATQVSYLIMMYISVLPIAISVR) form a helical membrane-spanning segment. Topologically, residues 842-874 (RTNVYEEQSLGVYAKENAEGVDESAPSNYVGSH) are cytoplasmic. A helical membrane pass occupies residues 875–896 (LRNQLSYDLWYICLGLFIICIA). Topologically, residues 897 to 909 (EGKRLKEQDLRFS) are extracellular. Residues 910 to 928 (IFAVLFEIVSAYGTVGMSM) lie within the membrane without spanning it. Residues 929-942 (GYPGVDCSLSGEFN) are Extracellular-facing. The chain crosses the membrane as a helical span at residues 943–965 (VISKLVIIAMMIRGRHRGLPYTI). The Cytoplasmic segment spans residues 966–1056 (DRAIMLPNAA…RYVVRTVSEV (91 aa)).

It belongs to the TrkH potassium transport family.

The protein resides in the cell membrane. It catalyses the reaction K(+)(in) = K(+)(out). The catalysed reaction is chloride(in) = chloride(out). TRK1-mediated chloride conductance is blocked by 4,4'-diisothiocyanatostilbene-2,2'-disulfonic acid. Its function is as follows. Potassium transporter that mediates K(+) influx, as well as Cl(-) efflux as a secondary function. TRK1 is the major K(+) uptake transporter that regulates membrane potential and intracellular pH. The TRK1-mediated Cl(-) efflux should serve as a Cl(-) detoxification route and may play a role in sustaining C.albicans on mammalian epithelial surfaces, or in physiological saline solutions such as saliva. In terms of biological role, mediates candidacidal activities of cysteine-free peptides, but not of defensins. The hallmark of salivary gland-secreted histatin-5 (Hst 5) killing of C.albicans is the rapid efflux of cellular ATP and other small nucleotides and ions from the cell as well as concurrent intracellular uptake of propidium iodide (PI). TRK1 is the channel for Hst 5-induced killing and histatin-5 may directly or indirectly alter TRK1 function, allowing the efflux of larger anions, including ATP, and the influx of small cationic dyes, such as PI. This is Potassium transporter TRK1 from Candida albicans (strain SC5314 / ATCC MYA-2876) (Yeast).